The primary structure comprises 138 residues: Small ribosomal subunit protein uS17 (138 aa).

2 stretches are compositionally biased toward basic and acidic residues: residues 1–18 (MSEEERNRGAEPEERAEA) and 43–55 (AFDRDAGKVQKDT). Residues 1–62 (MSEEERNRGA…KDTRRGRRKE (62 aa)) are disordered.

This sequence belongs to the universal ribosomal protein uS17 family. In terms of assembly, part of the 30S ribosomal subunit.

One of the primary rRNA binding proteins, it binds specifically to the 5'-end of 16S ribosomal RNA. The sequence is that of Small ribosomal subunit protein uS17 from Rubrobacter xylanophilus (strain DSM 9941 / JCM 11954 / NBRC 16129 / PRD-1).